The primary structure comprises 338 residues: Fusarubin cluster-specific transcription factor fsr6 (338 aa).

A DNA-binding region (zn(2)-C6 fungal-type) is located at residues 16-44; it reads CDACTTAKVRCSRTHPCERCEDNGQAKEC.

The protein localises to the nucleus. Transcription factor that regulates the expression of the gene cluster that mediates the biosynthesis of fusarubins, highly pigmented naphthoquinones responsible for the coloration of the fruiting bodies. This is Fusarubin cluster-specific transcription factor fsr6 from Gibberella fujikuroi (strain CBS 195.34 / IMI 58289 / NRRL A-6831) (Bakanae and foot rot disease fungus).